The chain runs to 767 residues: Transducin-like enhancer protein 1 (767 aa).

Disordered stretches follow at residues 1 to 26 and 200 to 346; these read MFPQ…PPQS and ADAE…TSAS. Basic and acidic residues-rich tracts occupy residues 200-209, 235-255, and 277-289; these read ADAEHRERDP, RKTE…RSED, and NGVD…RKDP. Residues 212–274 are CCN domain; it reads SCLTLPNGER…SPHSVHSYSS (63 aa). Residues 294 to 306 show a composition bias toward low complexity; that stretch reads PNSMTSSSSVSPS. Positions 324-346 are enriched in polar residues; it reads LKSSTPNSQSDLNTPGPSGTSAS. WD repeat units follow at residues 467 to 498, 525 to 555, 569 to 599, 611 to 641, 693 to 723, and 734 to 764; these read GIPR…HVYT, NRDN…SIWD, SSAP…VVWD, GHTD…RCWD, LHES…NAWR, and KESS…TVYE.

It belongs to the WD repeat Groucho/TLE family. In terms of processing, ubiquitinated by XIAP/BIRC4. In terms of tissue distribution, abundantly expressed in brain, lung, testis and ovary in comparison with liver, heart, kidney and spleen. Ubiquitously expressed in the developing embryo. Present in unfertilized and fertilized eggs.

It is found in the nucleus. Nuclear effector molecule. In Xenopus laevis (African clawed frog), this protein is Transducin-like enhancer protein 1 (esg1).